The sequence spans 325 residues: MATTQQPEATEHQHFGVVEIKDLENHKFIKPVKVVTNEDDIKKFLRSGACRDLLEYIQTLSDKIKSKPNSTKTQNSNEIKNIVSMLNEISVYIDNIPPLAQPMRYGNKAYRTFYQKLLDNVEELHKHLLPQSMHSSIIELSSYLMDAMGNQTRLDYGTGHELHFVVWTYCLRRIGFLKSTDEEDIVLNVFTTYLDLVRKLQRVYGLEPAGTHGVWSLDDYQFIPFIWGASQLIGNPFDIKPASVTIEKVVDQYYKEYLYIACIKYINTVKKGPFHEHSRDLFNISGAASWQKINTGMMKKFYDDVLSKVPIIQHFLFGSLISFSV.

Belongs to the PTPA-type PPIase family.

The protein localises to the cytoplasm. It catalyses the reaction [protein]-peptidylproline (omega=180) = [protein]-peptidylproline (omega=0). PPIases accelerate the folding of proteins. It catalyzes the cis-trans isomerization of proline imidic peptide bonds in oligopeptides. Acts as a regulatory subunit for PP2A-like phosphatases modulating their activity or substrate specificity, probably by inducing a conformational change in the catalytic subunit, a direct target of the PPIase. In Dictyostelium discoideum (Social amoeba), this protein is Probable serine/threonine-protein phosphatase 2A activator 1 (ppp2r4A).